A 681-amino-acid polypeptide reads, in one-letter code: Probable L-type lectin-domain containing receptor kinase S.7 (681 aa).

The N-terminal stretch at 1-21 (MSLSRKLLVIFFTWITALSMS) is a signal peptide. The Extracellular portion of the chain corresponds to 22 to 305 (KPIFVSSDNM…PSKKRRHRHN (284 aa)). Residues 30–265 (NMNFTFKSFT…IHLIENWSFK (236 aa)) form a legume-lectin like region. Residues asparagine 32, asparagine 42, asparagine 86, asparagine 121, asparagine 135, asparagine 261, and asparagine 281 are each glycosylated (N-linked (GlcNAc...) asparagine). The helical transmembrane segment at 306-326 (LAIGLGISCPVLICLALFVFG) threads the bilayer. Residues 327 to 681 (YFTLKKWKSV…EGDSIVYVVS (355 aa)) lie on the Cytoplasmic side of the membrane. Residues 365 to 643 (FHSSRVIGRG…RVLQILNNEI (279 aa)) enclose the Protein kinase domain. ATP-binding positions include 371–379 (IGRGAFGNV) and lysine 394. Aspartate 493 (proton acceptor) is an active-site residue.

It in the C-terminal section; belongs to the protein kinase superfamily. Ser/Thr protein kinase family. In the N-terminal section; belongs to the leguminous lectin family.

The protein resides in the cell membrane. The catalysed reaction is L-seryl-[protein] + ATP = O-phospho-L-seryl-[protein] + ADP + H(+). It catalyses the reaction L-threonyl-[protein] + ATP = O-phospho-L-threonyl-[protein] + ADP + H(+). Involved in resistance response to the pathogenic oomycetes Phytophthora infestans and Phytophthora capsici. The polypeptide is Probable L-type lectin-domain containing receptor kinase S.7 (Arabidopsis thaliana (Mouse-ear cress)).